The chain runs to 160 residues: Major pollen allergen Car b 1 isoforms 1A and 1B (160 aa).

The protein belongs to the BetVI family.

In Carpinus betulus (European hornbeam), this protein is Major pollen allergen Car b 1 isoforms 1A and 1B.